We begin with the raw amino-acid sequence, 150 residues long: Endoribonuclease YbeY (150 aa).

3 residues coordinate Zn(2+): His102, His106, and His112.

The protein belongs to the endoribonuclease YbeY family. Zn(2+) is required as a cofactor.

Its subcellular location is the cytoplasm. Its function is as follows. Single strand-specific metallo-endoribonuclease involved in late-stage 70S ribosome quality control and in maturation of the 3' terminus of the 16S rRNA. This is Endoribonuclease YbeY from Thermotoga petrophila (strain ATCC BAA-488 / DSM 13995 / JCM 10881 / RKU-1).